The sequence spans 213 residues: Orotate phosphoribosyltransferase (213 aa).

Residue Lys-26 participates in 5-phospho-alpha-D-ribose 1-diphosphate binding. 34–35 (FF) provides a ligand contact to orotate. Residues 72–73 (YK), Arg-99, Lys-100, Lys-103, His-105, and 124–132 (DDVITAGTA) contribute to the 5-phospho-alpha-D-ribose 1-diphosphate site. The orotate site is built by Thr-128 and Arg-156.

Belongs to the purine/pyrimidine phosphoribosyltransferase family. PyrE subfamily. As to quaternary structure, homodimer. The cofactor is Mg(2+).

The enzyme catalyses orotidine 5'-phosphate + diphosphate = orotate + 5-phospho-alpha-D-ribose 1-diphosphate. It functions in the pathway pyrimidine metabolism; UMP biosynthesis via de novo pathway; UMP from orotate: step 1/2. Functionally, catalyzes the transfer of a ribosyl phosphate group from 5-phosphoribose 1-diphosphate to orotate, leading to the formation of orotidine monophosphate (OMP). In Saccharophagus degradans (strain 2-40 / ATCC 43961 / DSM 17024), this protein is Orotate phosphoribosyltransferase.